An 87-amino-acid chain; its full sequence is Small ribosomal subunit protein bS20 (87 aa).

Residues 1–11 (MANHKSALKRI) are compositionally biased toward basic residues. The tract at residues 1–23 (MANHKSALKRIKQTEKRTERNRH) is disordered.

It belongs to the bacterial ribosomal protein bS20 family.

Its function is as follows. Binds directly to 16S ribosomal RNA. The sequence is that of Small ribosomal subunit protein bS20 from Geotalea uraniireducens (strain Rf4) (Geobacter uraniireducens).